The primary structure comprises 763 residues: Thiamine biosynthesis multifunctional protein ThiED (763 aa).

Positions 1–210 are thiamine-phosphate synthase; that stretch reads MTDFSLYLVT…ANPAAAATRL (210 aa). Residues 37-41 and Asn69 contribute to the 4-amino-2-methyl-5-(diphosphooxymethyl)pyrimidine site; that span reads QLRDK. Mg(2+) is bound by residues Asp70 and Asp88. Ser107 provides a ligand contact to 4-amino-2-methyl-5-(diphosphooxymethyl)pyrimidine. 2-[(2R,5Z)-2-carboxy-4-methylthiazol-5(2H)-ylidene]ethyl phosphate is bound at residue 140–142; the sequence is TAT. Lys143 contacts 4-amino-2-methyl-5-(diphosphooxymethyl)pyrimidine. Residues Gly174 and 194 to 195 contribute to the 2-[(2R,5Z)-2-carboxy-4-methylthiazol-5(2H)-ylidene]ethyl phosphate site; that span reads VS. The tract at residues 245 to 500 is hydroxymethylpyrimidine/phosphomethylpyrimidine kinase; that stretch reads LSIAGTDPTG…GTGNGPVDHG (256 aa). A 4-amino-5-hydroxymethyl-2-methylpyrimidine-binding site is contributed by Gln282. The interval 550-763 is thiaminase-2; sequence FTRALWEASG…RHGWTMVGSS (214 aa).

The protein in the N-terminal section; belongs to the thiamine-phosphate synthase family. It in the central section; belongs to the ThiD family. In the C-terminal section; belongs to the thiaminase-2 family. Mg(2+) serves as cofactor.

The enzyme catalyses 2-[(2R,5Z)-2-carboxy-4-methylthiazol-5(2H)-ylidene]ethyl phosphate + 4-amino-2-methyl-5-(diphosphooxymethyl)pyrimidine + 2 H(+) = thiamine phosphate + CO2 + diphosphate. It catalyses the reaction 2-(2-carboxy-4-methylthiazol-5-yl)ethyl phosphate + 4-amino-2-methyl-5-(diphosphooxymethyl)pyrimidine + 2 H(+) = thiamine phosphate + CO2 + diphosphate. The catalysed reaction is 4-methyl-5-(2-phosphooxyethyl)-thiazole + 4-amino-2-methyl-5-(diphosphooxymethyl)pyrimidine + H(+) = thiamine phosphate + diphosphate. It carries out the reaction 4-amino-5-hydroxymethyl-2-methylpyrimidine + ATP = 4-amino-2-methyl-5-(phosphooxymethyl)pyrimidine + ADP + H(+). The enzyme catalyses 4-amino-2-methyl-5-(phosphooxymethyl)pyrimidine + ATP = 4-amino-2-methyl-5-(diphosphooxymethyl)pyrimidine + ADP. It functions in the pathway cofactor biosynthesis; thiamine diphosphate biosynthesis; 4-amino-2-methyl-5-diphosphomethylpyrimidine from 5-amino-1-(5-phospho-D-ribosyl)imidazole: step 3/3. Its pathway is cofactor biosynthesis; thiamine diphosphate biosynthesis; thiamine phosphate from 4-amino-2-methyl-5-diphosphomethylpyrimidine and 4-methyl-5-(2-phosphoethyl)-thiazole: step 1/1. Condenses 4-methyl-5-(beta-hydroxyethyl)thiazole monophosphate (THZ-P) and 2-methyl-4-amino-5-hydroxymethyl pyrimidine pyrophosphate (HMP-PP) to form thiamine monophosphate (TMP). Functionally, catalyzes the phosphorylation of hydroxymethylpyrimidine phosphate (HMP-P) to HMP-PP, and of HMP to HMP-P. The sequence is that of Thiamine biosynthesis multifunctional protein ThiED (theD) from Corynebacterium glutamicum (strain ATCC 13032 / DSM 20300 / JCM 1318 / BCRC 11384 / CCUG 27702 / LMG 3730 / NBRC 12168 / NCIMB 10025 / NRRL B-2784 / 534).